Consider the following 246-residue polypeptide: Trypsin-5 (246 aa).

The N-terminal stretch at Met1 to Ala15 is a signal peptide. A propeptide spans Phe16–Lys23 (activation peptide). A Peptidase S1 domain is found at Ile24–Ala244. A disulfide bridge connects residues Cys48 and Cys64. Residues His63 and Asp107 each act as charge relay system in the active site. Disulfide bonds link Cys139–Cys206, Cys171–Cys185, and Cys196–Cys220. The active-site Charge relay system is the Ser200.

Belongs to the peptidase S1 family. In terms of processing, proteolytically cleaved and activated by an autocatalytic mechanism. Cleavage by CTRC inhibits autoactivation. In terms of tissue distribution, expressed in the heart, lung, brain, kidney, liver, epididymis, ovary and uterus. Expression in the testis is limited to round and elongating spermatids.

The protein resides in the cytoplasmic vesicle. It is found in the secretory vesicle. The protein localises to the acrosome. It catalyses the reaction Preferential cleavage: Arg-|-Xaa, Lys-|-Xaa.. Activated by autocatalytic cleavage. Cleavage by CTRC inhibits autoactivation. Functionally, serine protease capable of autoactivation. The chain is Trypsin-5 from Mus musculus (Mouse).